A 128-amino-acid chain; its full sequence is Prokineticin-2 (128 aa).

The first 27 residues, 1 to 27 (MRSSRCARLLLLLLLPPLLLTPPAGDA), serve as a signal peptide directing secretion. Intrachain disulfides connect cysteine 34–cysteine 46, cysteine 40–cysteine 58, cysteine 45–cysteine 106, cysteine 68–cysteine 114, and cysteine 108–cysteine 124. The tract at residues 71–95 (MTRKNHFGNGRQERRKRKRRRKKKV) is disordered. A compositionally biased stretch (basic residues) spans 83 to 95 (ERRKRKRRRKKKV).

The protein belongs to the AVIT (prokineticin) family.

It is found in the secreted. Its function is as follows. May function as an output molecule from the suprachiasmatic nucleus (SCN) that transmits behavioral circadian rhythm. May also function locally within the SCN to synchronize output. Potently contracts gastrointestinal (GI) smooth muscle. The chain is Prokineticin-2 (PROK2) from Bos taurus (Bovine).